Reading from the N-terminus, the 287-residue chain is 2-dehydro-3-deoxyphosphooctonate aldolase (287 aa).

It belongs to the KdsA family.

The protein localises to the cytoplasm. It catalyses the reaction D-arabinose 5-phosphate + phosphoenolpyruvate + H2O = 3-deoxy-alpha-D-manno-2-octulosonate-8-phosphate + phosphate. Its pathway is carbohydrate biosynthesis; 3-deoxy-D-manno-octulosonate biosynthesis; 3-deoxy-D-manno-octulosonate from D-ribulose 5-phosphate: step 2/3. It functions in the pathway bacterial outer membrane biogenesis; lipopolysaccharide biosynthesis. In Magnetococcus marinus (strain ATCC BAA-1437 / JCM 17883 / MC-1), this protein is 2-dehydro-3-deoxyphosphooctonate aldolase.